We begin with the raw amino-acid sequence, 462 residues long: Chromosomal replication initiator protein DnaA (462 aa).

The tract at residues 1-83 (MSLSLWQQCL…LRFEVGSKPA (83 aa)) is domain I, interacts with DnaA modulators. A domain II region spans residues 83-125 (AARAHNNPVTASVSAPVAPVTRSAPMRPSWDNSPAQPELSYRS). Residues 104–125 (RSAPMRPSWDNSPAQPELSYRS) form a disordered region. Polar residues predominate over residues 112 to 125 (WDNSPAQPELSYRS). Residues 126–342 (NVNPKHTFDN…GALNRVIANA (217 aa)) form a domain III, AAA+ region region. ATP contacts are provided by Gly170, Gly172, Lys173, and Thr174. Residues 343–462 (NFTGRAITID…FSNLIRTLSS (120 aa)) are domain IV, binds dsDNA.

The protein belongs to the DnaA family. As to quaternary structure, oligomerizes as a right-handed, spiral filament on DNA at oriC.

Its subcellular location is the cytoplasm. Functionally, plays an essential role in the initiation and regulation of chromosomal replication. ATP-DnaA binds to the origin of replication (oriC) to initiate formation of the DNA replication initiation complex once per cell cycle. Binds the DnaA box (a 9 base pair repeat at the origin) and separates the double-stranded (ds)DNA. Forms a right-handed helical filament on oriC DNA; dsDNA binds to the exterior of the filament while single-stranded (ss)DNA is stabiized in the filament's interior. The ATP-DnaA-oriC complex binds and stabilizes one strand of the AT-rich DNA unwinding element (DUE), permitting loading of DNA polymerase. After initiation quickly degrades to an ADP-DnaA complex that is not apt for DNA replication. Binds acidic phospholipids. The polypeptide is Chromosomal replication initiator protein DnaA (Yersinia pseudotuberculosis serotype O:1b (strain IP 31758)).